Reading from the N-terminus, the 320-residue chain is Cytochrome f (320 aa).

Residues Met-1 to Ala-35 form the signal peptide. Heme-binding residues include Tyr-36, Cys-56, Cys-59, and His-60. The chain crosses the membrane as a helical span at residues Ile-286–Lys-306.

Belongs to the cytochrome f family. In terms of assembly, the 4 large subunits of the cytochrome b6-f complex are cytochrome b6, subunit IV (17 kDa polypeptide, petD), cytochrome f and the Rieske protein, while the 4 small subunits are PetG, PetL, PetM and PetN. The complex functions as a dimer. It depends on heme as a cofactor.

The protein localises to the plastid. Its subcellular location is the chloroplast thylakoid membrane. Its function is as follows. Component of the cytochrome b6-f complex, which mediates electron transfer between photosystem II (PSII) and photosystem I (PSI), cyclic electron flow around PSI, and state transitions. This is Cytochrome f from Tetradesmus obliquus (Green alga).